Consider the following 70-residue polypeptide: Flexible pilin (70 aa).

Residues 1–24 (MPNFFRNGCIALVGSVAAMGAAHA) form the signal peptide.

In terms of assembly, homomer.

The protein localises to the fimbrium. Fimbriae (also called pili) are polar filaments radiating from the surface of the bacterium to a length of 0.5-1.5 micrometers and numbering 100-300 per cell. They enable bacteria to colonize the epithelium of specific host organs. Flexible pili possess hemagglutinating function. The protein is Flexible pilin (aerA) of Aeromonas hydrophila.